Reading from the N-terminus, the 113-residue chain is Large ribosomal subunit protein uL22 (113 aa).

This sequence belongs to the universal ribosomal protein uL22 family. Part of the 50S ribosomal subunit.

Its function is as follows. This protein binds specifically to 23S rRNA; its binding is stimulated by other ribosomal proteins, e.g. L4, L17, and L20. It is important during the early stages of 50S assembly. It makes multiple contacts with different domains of the 23S rRNA in the assembled 50S subunit and ribosome. Functionally, the globular domain of the protein is located near the polypeptide exit tunnel on the outside of the subunit, while an extended beta-hairpin is found that lines the wall of the exit tunnel in the center of the 70S ribosome. This Bacillus thuringiensis subsp. konkukian (strain 97-27) protein is Large ribosomal subunit protein uL22.